A 583-amino-acid polypeptide reads, in one-letter code: Aspartate--tRNA ligase (583 aa).

E174 is a binding site for L-aspartate. The interval 198 to 201 (QITK) is aspartate. R220 contacts L-aspartate. Residues 220-222 (RDE) and Q229 each bind ATP. An L-aspartate-binding site is contributed by H443. E477 contacts ATP. Residue R484 participates in L-aspartate binding. 529-532 (GLDR) provides a ligand contact to ATP.

The protein belongs to the class-II aminoacyl-tRNA synthetase family. Type 1 subfamily. Homodimer.

The protein resides in the cytoplasm. It carries out the reaction tRNA(Asp) + L-aspartate + ATP = L-aspartyl-tRNA(Asp) + AMP + diphosphate. Functionally, catalyzes the attachment of L-aspartate to tRNA(Asp) in a two-step reaction: L-aspartate is first activated by ATP to form Asp-AMP and then transferred to the acceptor end of tRNA(Asp). This is Aspartate--tRNA ligase from Streptococcus agalactiae serotype Ia (strain ATCC 27591 / A909 / CDC SS700).